We begin with the raw amino-acid sequence, 462 residues long: Centrosomal protein of 55 kDa (462 aa).

Basic and acidic residues predominate over residues 1–11 (MSSRSPKDLIK). Residues 1 to 26 (MSSRSPKDLIKSKWGSRPSSSKSDTA) are disordered. Residues 12–23 (SKWGSRPSSSKS) show a composition bias toward low complexity. The stretch at 50–400 (KMAEKGRSRL…TQLESLKQLH (351 aa)) forms a coiled coil. Serine 96 and serine 99 each carry phosphoserine. Residues 157–235 (ANCFNSSMNS…EGYLQVEKQK (79 aa)) are interaction with TSG101. Residues 160–214 (FNSSMNSIHEKEMQLKDALEKNQQWLVYDQQREAYVKGLLAKIFELEKRTETAAA) are interaction with PDCD6IP. The interval 354–462 (QMQACTLDFE…LLVHVEYCMK (109 aa)) is required for localization to the interphase centrosome and to the midbody during cytokinesis. Positions 410–430 (PLQREPESRVKATSPKSPSAA) are disordered. Residues serine 423, serine 426, and serine 428 each carry the phosphoserine modification. Phosphoserine; by PLK1 is present on serine 434.

In terms of assembly, homodimer. Interacts (phosphorylated on Ser-423 and Ser-426) with PLK1; the interaction is indirect via the MTMR3:MTMR4 heterooligomer, occurs during early mitosis, regulates the phosphorylation of CEP55 by PLK1 and its recruitment to the midbody where it can mediate cell abscission. Interacts with AKAP9/CG-NAP; the interaction occurs in interphase and is lost upon mitotic entry. Interacts with PCNT/Kendrin; the interaction occurs in interphase and is lost upon mitotic entry. Directly interacts with PDCD6IP; this interaction is required for PDCD6IP targeting to the midbody; CEP55 binds PDCD6IP in a 2:1 stoichiometry; PDCD6IP competes with TSG101 for the same binding site. Interacts with TSG101; TSG101 competes with PDCD6IP for the same binding site; interaction is required for cytokinesis. Interacts with MVB12A, VPS37B, VPS37C and VPS28. Post-translationally, there is a hierachy of phosphorylation, where both Ser-423 and Ser-426 are phosphorylated at the onset of mitosis, prior to Ser-434. Phosphorylation at Ser-423 and Ser-426 is required for dissociation from the centrosome at the G2/M boundary. Phosphorylation at the 3 sites, Ser-423, Ser-426 and Ser-434, is required for protein function at the final stages of cell division to complete cytokinesis successfully.

The protein localises to the cytoplasm. It is found in the cytoskeleton. It localises to the microtubule organizing center. The protein resides in the centrosome. Its subcellular location is the centriole. The protein localises to the cleavage furrow. It is found in the midbody. It localises to the midbody ring. Plays a role in mitotic exit and cytokinesis. Recruits PDCD6IP and TSG101 to midbody during cytokinesis. Required for successful completion of cytokinesis. Not required for microtubule nucleation. Plays a role in the development of the brain and kidney. This chain is Centrosomal protein of 55 kDa, found in Mus musculus (Mouse).